The primary structure comprises 102 residues: MYAIVKAGGHQEKVEVGDVILVNRLDAKKGDTVEFPVSLVVDGDKVTLAAADLAKVSVKAEVVNDEAKGPKISIQKYKNKTGVARRKGHRQKLTIVKITAIA.

The protein belongs to the bacterial ribosomal protein bL21 family. In terms of assembly, part of the 50S ribosomal subunit. Contacts protein L20.

Functionally, this protein binds to 23S rRNA in the presence of protein L20. This chain is Large ribosomal subunit protein bL21, found in Bifidobacterium longum (strain DJO10A).